We begin with the raw amino-acid sequence, 430 residues long: Adenylosuccinate synthetase (430 aa).

Residues 12–18 (GDEGKGK) and 40–42 (GHT) contribute to the GTP site. Asp13 serves as the catalytic Proton acceptor. 2 residues coordinate Mg(2+): Asp13 and Gly40. IMP is bound by residues 13 to 16 (DEGK), 38 to 41 (NAGH), Thr130, Arg144, Gln224, Thr239, and Arg303. His41 functions as the Proton donor in the catalytic mechanism. Substrate is bound at residue 299–305 (VVTGRPR). GTP contacts are provided by residues Arg305, 331–333 (KLD), and 413–415 (STS).

The protein belongs to the adenylosuccinate synthetase family. In terms of assembly, homodimer. Mg(2+) serves as cofactor.

It is found in the cytoplasm. The enzyme catalyses IMP + L-aspartate + GTP = N(6)-(1,2-dicarboxyethyl)-AMP + GDP + phosphate + 2 H(+). It functions in the pathway purine metabolism; AMP biosynthesis via de novo pathway; AMP from IMP: step 1/2. Plays an important role in the de novo pathway of purine nucleotide biosynthesis. Catalyzes the first committed step in the biosynthesis of AMP from IMP. This Azorhizobium caulinodans (strain ATCC 43989 / DSM 5975 / JCM 20966 / LMG 6465 / NBRC 14845 / NCIMB 13405 / ORS 571) protein is Adenylosuccinate synthetase.